A 251-amino-acid polypeptide reads, in one-letter code: Zinc import ATP-binding protein ZnuC (251 aa).

The 216-residue stretch at 5–220 folds into the ABC transporter domain; it reads VSLENVSVSF…PEFISMFGPR (216 aa). Residue 37–44 coordinates ATP; it reads GPNGAGKS.

It belongs to the ABC transporter superfamily. Zinc importer (TC 3.A.1.15.5) family. In terms of assembly, the complex is composed of two ATP-binding proteins (ZnuC), two transmembrane proteins (ZnuB) and a solute-binding protein (ZnuA).

It localises to the cell inner membrane. The enzyme catalyses Zn(2+)(out) + ATP(in) + H2O(in) = Zn(2+)(in) + ADP(in) + phosphate(in) + H(+)(in). Functionally, part of the ABC transporter complex ZnuABC involved in zinc import. Responsible for energy coupling to the transport system. This chain is Zinc import ATP-binding protein ZnuC, found in Shigella flexneri serotype 5b (strain 8401).